The sequence spans 498 residues: 3-octaprenyl-4-hydroxybenzoate carboxy-lyase (498 aa).

Position 175 (N175) interacts with Mn(2+). Prenylated FMN-binding positions include 178-180 (IYR), 192-194 (RWL), and 197-198 (RG). E241 contacts Mn(2+). The active-site Proton donor is the D290.

This sequence belongs to the UbiD family. In terms of assembly, homohexamer. Prenylated FMN serves as cofactor. The cofactor is Mn(2+).

It localises to the cell membrane. The catalysed reaction is a 4-hydroxy-3-(all-trans-polyprenyl)benzoate + H(+) = a 2-(all-trans-polyprenyl)phenol + CO2. The protein operates within cofactor biosynthesis; ubiquinone biosynthesis. Its function is as follows. Catalyzes the decarboxylation of 3-octaprenyl-4-hydroxy benzoate to 2-octaprenylphenol, an intermediate step in ubiquinone biosynthesis. This is 3-octaprenyl-4-hydroxybenzoate carboxy-lyase from Pectobacterium atrosepticum (strain SCRI 1043 / ATCC BAA-672) (Erwinia carotovora subsp. atroseptica).